Consider the following 201-residue polypeptide: Dephospho-CoA kinase (201 aa).

The region spanning tryptophan 3–asparagine 201 is the DPCK domain. Alanine 11–threonine 16 provides a ligand contact to ATP.

This sequence belongs to the CoaE family.

The protein resides in the cytoplasm. It carries out the reaction 3'-dephospho-CoA + ATP = ADP + CoA + H(+). Its pathway is cofactor biosynthesis; coenzyme A biosynthesis; CoA from (R)-pantothenate: step 5/5. Its function is as follows. Catalyzes the phosphorylation of the 3'-hydroxyl group of dephosphocoenzyme A to form coenzyme A. This is Dephospho-CoA kinase from Bdellovibrio bacteriovorus (strain ATCC 15356 / DSM 50701 / NCIMB 9529 / HD100).